The sequence spans 258 residues: UPF0246 protein YaaA (258 aa).

Belongs to the UPF0246 family.

This Escherichia coli O127:H6 (strain E2348/69 / EPEC) protein is UPF0246 protein YaaA.